The primary structure comprises 316 residues: uncharacterized protein (316 aa).

The Cytoplasmic portion of the chain corresponds to 1 to 70 (SFAYSGNSES…NNDEIGIWNY (70 aa)). A helical membrane pass occupies residues 71–91 (ISVAEMGGVLLFLSYWIWTCL). Residue His-92 is a topological domain, lumenal. The chain crosses the membrane as a helical span at residues 93-113 (FSKIIFPAQKVICLYIFLFAL). The Cytoplasmic portion of the chain corresponds to 114 to 170 (NQTLQECIEEYVFSSECIKYRQFYSVYEIIDFLRTNFYRLFVIYCALGFGITRTVPK). The chain crosses the membrane as a helical span at residues 171-191 (YLMIKGISIVIALCSVYWISL). Over 192–194 (YKD) the chain is Lumenal. A helical transmembrane segment spans residues 195-215 (VYVVSEIFDMIQYEVSPAIWV). The Cytoplasmic segment spans residues 216–245 (YSICHLLKQCTSVTTYENASKARFFRRMLN). The chain crosses the membrane as a helical span at residues 246–266 (AFIFIFCASPMLHYLSNIIFG). The Lumenal segment spans residues 267–316 (NFDYRLSVIIGDLFTFMEKIAFPCYIMFPTHNEALAYNRNVAEEAQEKMI).

It belongs to the UPF0742 family.

It localises to the endoplasmic reticulum. The protein localises to the membrane. This is an uncharacterized protein from Schizosaccharomyces pombe (strain 972 / ATCC 24843) (Fission yeast).